The chain runs to 499 residues: RNA polymerase sigma factor SigA (499 aa).

2 stretches are compositionally biased toward basic residues: residues 1–12 (MSSPKKNFKKPQ) and 77–87 (KKRRGRKPKHA). Disordered stretches follow at residues 1-25 (MSSP…LNEE) and 68-89 (QENK…HAPL). The tract at residues 252 to 322 (LVTSNLRLVV…TRAIADQART (71 aa)) is sigma-70 factor domain-2. Positions 276-279 (DLIQ) match the Interaction with polymerase core subunit RpoC motif. Positions 331–412 (ETINRLAKAE…DTDAQMPDEF (82 aa)) are sigma-70 factor domain-3. The interval 425–480 (LLNNCLSEQEELIVRMRIGMPPYNETKTLDEVSQKIKIPREKIRQIETKAIRKLRQ) is sigma-70 factor domain-4. A DNA-binding region (H-T-H motif) is located at residues 453-472 (LDEVSQKIKIPREKIRQIET).

This sequence belongs to the sigma-70 factor family. RpoD/SigA subfamily. In terms of assembly, interacts transiently with the RNA polymerase catalytic core.

The protein localises to the cytoplasm. In terms of biological role, sigma factors are initiation factors that promote the attachment of RNA polymerase to specific initiation sites and are then released. This sigma factor is the primary sigma factor during exponential growth. This is RNA polymerase sigma factor SigA from Mycoplasma pneumoniae (strain ATCC 29342 / M129 / Subtype 1) (Mycoplasmoides pneumoniae).